A 171-amino-acid chain; its full sequence is Protein-export protein SecB (171 aa).

The protein belongs to the SecB family. Homotetramer, a dimer of dimers. One homotetramer interacts with 1 SecA dimer.

The protein localises to the cytoplasm. In terms of biological role, one of the proteins required for the normal export of preproteins out of the cell cytoplasm. It is a molecular chaperone that binds to a subset of precursor proteins, maintaining them in a translocation-competent state. It also specifically binds to its receptor SecA. In Gluconacetobacter diazotrophicus (strain ATCC 49037 / DSM 5601 / CCUG 37298 / CIP 103539 / LMG 7603 / PAl5), this protein is Protein-export protein SecB.